The following is a 63-amino-acid chain: Adipokinetic prohormone type 1 (63 aa).

The first 22 residues, 1–22, serve as a signal peptide directing secretion; sequence MVQRCLVVALLVVVVAAALCSA. Gln-23 is modified (pyrrolidone carboxylic acid). Threonine amide is present on Thr-32.

This sequence belongs to the AKH/HRTH/RPCH family. Adipokinetic hormone precursor-related peptide (APRP) can form three type of disulfide-bond dimers: p1 (alpha-alpha), p2 (alpha-beta), and p3 (beta-beta).

The protein localises to the secreted. This hormone, released from cells in the corpora cardiaca, causes release of diglycerides from the fat body and stimulation of muscles to use these diglycerides as an energy source during energy-demanding processes. This chain is Adipokinetic prohormone type 1, found in Schistocerca nitens (Vagrant locust).